The chain runs to 781 residues: Putative UPF0313 protein YPO0674/y3502/YP_2990 (781 aa).

The 279-residue stretch at 368–646 (AYDMIRFSIN…KALLRYHDPA (279 aa)) folds into the Radical SAM core domain. Positions 382, 386, and 389 each coordinate [4Fe-4S] cluster. The tract at residues 681–781 (REARRALRHH…AGSRGKNRQH (101 aa)) is disordered. Polar residues predominate over residues 696-708 (KHTSITRQRQPSN). The span at 726–750 (TSSAHSTSANQSTSANQSTSAAHST) shows a compositional bias: low complexity.

Belongs to the UPF0313 family. [4Fe-4S] cluster is required as a cofactor.

The sequence is that of Putative UPF0313 protein YPO0674/y3502/YP_2990 from Yersinia pestis.